Reading from the N-terminus, the 213-residue chain is Imidazole glycerol phosphate synthase subunit HisH (213 aa).

The region spanning 4–213 (SIAIVDYGMG…LYRNFVHWKP (210 aa)) is the Glutamine amidotransferase type-1 domain. Cys83 functions as the Nucleophile in the catalytic mechanism. Active-site residues include His193 and Glu195.

Heterodimer of HisH and HisF.

It is found in the cytoplasm. It catalyses the reaction 5-[(5-phospho-1-deoxy-D-ribulos-1-ylimino)methylamino]-1-(5-phospho-beta-D-ribosyl)imidazole-4-carboxamide + L-glutamine = D-erythro-1-(imidazol-4-yl)glycerol 3-phosphate + 5-amino-1-(5-phospho-beta-D-ribosyl)imidazole-4-carboxamide + L-glutamate + H(+). The enzyme catalyses L-glutamine + H2O = L-glutamate + NH4(+). The protein operates within amino-acid biosynthesis; L-histidine biosynthesis; L-histidine from 5-phospho-alpha-D-ribose 1-diphosphate: step 5/9. Functionally, IGPS catalyzes the conversion of PRFAR and glutamine to IGP, AICAR and glutamate. The HisH subunit catalyzes the hydrolysis of glutamine to glutamate and ammonia as part of the synthesis of IGP and AICAR. The resulting ammonia molecule is channeled to the active site of HisF. This chain is Imidazole glycerol phosphate synthase subunit HisH, found in Burkholderia lata (strain ATCC 17760 / DSM 23089 / LMG 22485 / NCIMB 9086 / R18194 / 383).